The sequence spans 213 residues: Sclerostin (213 aa).

The signal sequence occupies residues M1–G23. Residues G41 to E71 are disordered. The N-linked (GlcNAc...) asparagine glycan is linked to N53. Disulfide bonds link C80/C134, C94/C148, C105/C165, and C109/C167. One can recognise a CTCK domain in the interval E82 to R172. N-linked (GlcNAc...) asparagine glycosylation occurs at N175. The segment at E178–Y213 is disordered. Basic residues predominate over residues Q190–G201.

This sequence belongs to the sclerostin family. In terms of assembly, interacts with LRP4 (via the extracellular domain); the interaction facilitates the inhibition of Wnt signaling. Interacts with LRP5 (via the first two YWTD-EGF repeat domains); the interaction inhibits Wnt-mediated signaling. Interacts with LRP6.

The protein resides in the secreted. It localises to the extracellular space. It is found in the extracellular matrix. Its function is as follows. Negative regulator of bone growth that acts through inhibition of Wnt signaling and bone formation. This Chlorocebus aethiops (Green monkey) protein is Sclerostin.